Reading from the N-terminus, the 108-residue chain is Cytochrome c (108 aa).

Positions 19, 22, 23, and 85 each coordinate heme c.

Belongs to the cytochrome c family. Post-translationally, binds 1 heme c group covalently per subunit.

The protein localises to the mitochondrion intermembrane space. In terms of biological role, electron carrier protein. The oxidized form of the cytochrome c heme group can accept an electron from the heme group of the cytochrome c1 subunit of cytochrome reductase. Cytochrome c then transfers this electron to the cytochrome oxidase complex, the final protein carrier in the mitochondrial electron-transport chain. The polypeptide is Cytochrome c (Stellaria longipes (Longstalk starwort)).